The chain runs to 125 residues: Cu-Zn superoxide dismutase-like protein OPG175 (125 aa).

An intrachain disulfide couples Cys-52 to Cys-102.

It belongs to the Cu-Zn superoxide dismutase family.

Its subcellular location is the virion. The protein localises to the host cytoplasm. Functionally, superoxide dismutase-like protein with no enzymatic activity. This chain is Cu-Zn superoxide dismutase-like protein OPG175 (OPG175), found in Homo sapiens (Human).